The primary structure comprises 1291 residues: MLDVNFFDELRIGLATADDIRQWSHGEVKKPETINYRTLKPEKDGLFCEKIFGPTRDWECYCGKYKRVRFKGIICERCGVEVTRAKVRRERMGHIELAAPVTHIWYFKGVPSRLGYLLDLAPKDLEKVIYFAAYMVTWVDTEARERDLPSLEAQISVERQHLEQRRDSAIEERHRKLEADLAELEEQGAKADARRKVREAAEREIRQIRDRAQREIDRLEEVWNRFKNLKVQDLEGDEQLYREMRDRFGKYFRGGMGAQAIKERLANFDLEAEAEKLREIIRTGKGQKKARALKRLKVVSAFLNTRNSPMGMVLDCVPVIPPDLRPMVQLDGGRFATSDLNDLYRRVINRNNRLKRLLDLGAPEIIVNNEKRMLQEAVDALFDNGRRGRPVTGPGNRPLKSLSDMLKGKQGRFRQNLLGKRVDYSGRSVIVVGPQLKLHQCGLPKQMALELFKPFVMKRLVDLNHAQNIKSAKRMVERARPVVWDVLEEVISEHPVLLNRAPTLHRLGIQAFEPQLVEGKAIQIHPLVCTAFNADFDGDQMAVHLPLSAEAQAEARILMLATNNILKPSDGKPVTMPTQDMVIGLYYLTTMKEGAKGEGRAFSNIGEAIMAYDLGELDLQAKIKLRVEGDTVPPVNWEPPEDYQPGQPYILETTLGRYLFNETTPEDYPFVNQQMGKKQLSALVTELAEKYSKVQVATTLDALKDAGYYWATRSGLTISISDVIPPPNKQQILDKYEQQAQKIQRQYERGLISDDERRQELIHIWTKATDEVAKDMEENSPPDNPVWMMVNSGSRGNPLQVRQIAAIRGLVSNTKGETIPRPIKSSYREGLTVLEYFISTHGQRKGLADTALRTADSGYLTRRLVDVAQDVIVREVDCGTDRFLWQEIGERRPDGTIVRKHNVENTGFGRTLAEDVVVDGKVIATKLSDTTEALIDKLLAAGVTRIRIRSALVCESKIGVCATCYGRSLATGKPVDVGEAVGIIAAQSIGEPGTQLTMRTFHMGGTAGQDITHGLPRVQELFEARVPKGVAPISEVEGRVRIEETDKSRKIIVVPDDGSDEVSYQVPMRAPLLVQDGQRVEVGQQLVQGTVNPHEILRILGPRAVQQHLVSEVQEVYKSQGVSIHDKHIEIIVRQMLKRVNVLESGDTKLLPGEMIERPKFEEINRRVVAEGGQPASARPVLLGITKASLATESWLSAASFQETTRVLTENAIHGKSDPLLGLKENVIIGKLIPAGTGMPQYRNIRVEPTEEAKASMYSVSSYEEPSEYTFGQGSGEAVPLEDYDFGSYNR.

Cys60, Cys62, Cys75, and Cys78 together coordinate Zn(2+). Residues Asp535, Asp537, and Asp539 each contribute to the Mg(2+) site. 4 residues coordinate Zn(2+): Cys878, Cys954, Cys961, and Cys964.

Belongs to the RNA polymerase beta' chain family. In terms of assembly, the RNAP catalytic core consists of 2 alpha, 1 beta, 1 beta' and 1 omega subunit. When a sigma factor is associated with the core the holoenzyme is formed, which can initiate transcription. Mg(2+) serves as cofactor. Requires Zn(2+) as cofactor.

It carries out the reaction RNA(n) + a ribonucleoside 5'-triphosphate = RNA(n+1) + diphosphate. Its function is as follows. DNA-dependent RNA polymerase catalyzes the transcription of DNA into RNA using the four ribonucleoside triphosphates as substrates. In Thermobifida fusca (strain YX), this protein is DNA-directed RNA polymerase subunit beta'.